Consider the following 93-residue polypeptide: UPF0367 protein ssl1972 (93 aa).

Belongs to the UPF0367 family.

The polypeptide is UPF0367 protein ssl1972 (Synechocystis sp. (strain ATCC 27184 / PCC 6803 / Kazusa)).